A 217-amino-acid chain; its full sequence is Transcriptional regulatory protein CutR (217 aa).

The region spanning 2-116 (RVLVVEDEQL…ELIARVRALG (115 aa)) is the Response regulatory domain. Residue Asp-51 is modified to 4-aspartylphosphate. Positions 124 to 217 (PPVLERAGIK…VTVPGSGYRI (94 aa)) form a DNA-binding region, ompR/PhoB-type.

Functionally, member of the two-component regulatory system CutS/CutR, involved in the regulation of copper metabolism. CutR suppresses a defective melC1 gene, encoding a putative copper-transfer gene, probably by altering copper metabolism. This chain is Transcriptional regulatory protein CutR (cutR), found in Streptomyces lividans.